The chain runs to 135 residues: Cofilin-4 (135 aa).

One can recognise an ADF-H domain in the interval 3-135; that stretch reads SCASINDEVI…SQSLVEERCK (133 aa).

It belongs to the actin-binding proteins ADF family.

The protein resides in the cytoplasm. Its subcellular location is the cytoskeleton. In terms of biological role, controls actin polymerization and depolymerization. The polypeptide is Cofilin-4 (cofE) (Dictyostelium discoideum (Social amoeba)).